The following is a 72-amino-acid chain: MALPKRRLSHSRQGNHRAHVALTAPAVMECPQCNSPKLSHQACSVCGTYNGRTVIDMEAIAKKKADKSKGQQ.

The protein belongs to the bacterial ribosomal protein bL32 family.

This Dehalococcoides mccartyi (strain ATCC BAA-2100 / JCM 16839 / KCTC 5957 / BAV1) protein is Large ribosomal subunit protein bL32.